We begin with the raw amino-acid sequence, 302 residues long: NAD kinase 2 (302 aa).

Catalysis depends on D78, which acts as the Proton acceptor. NAD(+) contacts are provided by residues D78 to G79, N152 to E153, D182, T193 to S198, and A217.

It belongs to the NAD kinase family. It depends on a divalent metal cation as a cofactor.

Its subcellular location is the cytoplasm. It carries out the reaction NAD(+) + ATP = ADP + NADP(+) + H(+). Functionally, involved in the regulation of the intracellular balance of NAD and NADP, and is a key enzyme in the biosynthesis of NADP. Catalyzes specifically the phosphorylation on 2'-hydroxyl of the adenosine moiety of NAD to yield NADP. The polypeptide is NAD kinase 2 (Prochlorococcus marinus (strain SARG / CCMP1375 / SS120)).